The sequence spans 200 residues: AP-5 complex subunit sigma-1 (200 aa).

In terms of assembly, probably part of the adaptor protein complex 5 (AP-5) a tetramer composed of AP5B1, AP5M1, AP5S1 and AP5Z1. Interacts with ZFYVE26 and SPG11.

The protein resides in the cytoplasm. It localises to the cytosol. The protein localises to the late endosome membrane. Its subcellular location is the lysosome membrane. In terms of biological role, as part of AP-5, a probable fifth adaptor protein complex it may be involved in endosomal transport. According to PubMed:20613862, it is required for efficient homologous recombination DNA double-strand break repair. This is AP-5 complex subunit sigma-1 (AP5S1) from Homo sapiens (Human).